Reading from the N-terminus, the 298-residue chain is ATP synthase F(1) complex subunit gamma, mitochondrial (298 aa).

The N-terminal 25 residues, Met-1–Met-25, are a transit peptide targeting the mitochondrion. Lys-39 bears the N6-acetyllysine mark. Lys-49 carries the post-translational modification N6-succinyllysine. Residue Lys-55 is modified to N6-acetyllysine. At Lys-115 the chain carries N6-acetyllysine; alternate. Lys-115 carries the post-translational modification N6-succinyllysine; alternate. Ser-146 is modified (phosphoserine). Lys-154 carries the N6-acetyllysine; alternate modification. Lys-154 carries the N6-succinyllysine; alternate modification. Lys-197 carries the post-translational modification N6-acetyllysine. The residue at position 270 (Lys-270) is an N6-succinyllysine.

The protein belongs to the ATPase gamma chain family. In terms of assembly, component of the ATP synthase complex composed at least of ATP5F1A/subunit alpha, ATP5F1B/subunit beta, ATP5MC1/subunit c (homooctomer), MT-ATP6/subunit a, MT-ATP8/subunit 8, ATP5ME/subunit e, ATP5MF/subunit f, ATP5MG/subunit g, ATP5MK/subunit k, ATP5MJ/subunit j, ATP5F1C/subunit gamma, ATP5F1D/subunit delta, ATP5F1E/subunit epsilon, ATP5PF/subunit F6, ATP5PB/subunit b, ATP5PD/subunit d, ATP5PO/subunit OSCP. ATP synthase complex consists of a soluble F(1) head domain (subunits alpha(3) and beta(3)) - the catalytic core - and a membrane F(0) domain - the membrane proton channel (subunits c, a, 8, e, f, g, k and j). These two domains are linked by a central stalk (subunits gamma, delta, and epsilon) rotating inside the F1 region and a stationary peripheral stalk (subunits F6, b, d, and OSCP). Interacts with FLVCR2; this interaction occurs in the absence of heme and is disrupted upon heme binding.

It is found in the mitochondrion inner membrane. Subunit gamma, of the mitochondrial membrane ATP synthase complex (F(1)F(0) ATP synthase or Complex V) that produces ATP from ADP in the presence of a proton gradient across the membrane which is generated by electron transport complexes of the respiratory chain. ATP synthase complex consist of a soluble F(1) head domain - the catalytic core - and a membrane F(1) domain - the membrane proton channel. These two domains are linked by a central stalk rotating inside the F(1) region and a stationary peripheral stalk. During catalysis, ATP synthesis in the catalytic domain of F(1) is coupled via a rotary mechanism of the central stalk subunits to proton translocation. In vivo, can only synthesize ATP although its ATP hydrolase activity can be activated artificially in vitro. With the central stalk subunit delta, is essential for the biogenesis of F(1) catalytic part of the ATP synthase complex namely in the formation of F1 assembly intermediate. This is ATP synthase F(1) complex subunit gamma, mitochondrial from Bos taurus (Bovine).